A 180-amino-acid polypeptide reads, in one-letter code: Nucleoside triphosphate/diphosphate phosphatase (180 aa).

Arg26 functions as the Proton donor in the catalytic mechanism. Mg(2+) is bound by residues Asn90, Asp106, Asp108, Asp110, Asp123, and Glu126.

It belongs to the Ntdp family. The cofactor is Mg(2+).

The catalysed reaction is a ribonucleoside 5'-triphosphate + H2O = a ribonucleoside 5'-diphosphate + phosphate + H(+). The enzyme catalyses a ribonucleoside 5'-diphosphate + H2O = a ribonucleoside 5'-phosphate + phosphate + H(+). Has nucleoside phosphatase activity towards nucleoside triphosphates and nucleoside diphosphates. The polypeptide is Nucleoside triphosphate/diphosphate phosphatase (Staphylococcus haemolyticus (strain JCSC1435)).